The sequence spans 485 residues: Noelin (485 aa).

The N-terminal stretch at 1–16 is a signal peptide; that stretch reads MSVPLLKIGVVLSTMA. N-linked (GlcNAc...) asparagine glycosylation is found at N33, N103, N187, N288, N307, N394, N431, and N473. Positions 87 to 225 form a coiled coil; the sequence is RDARTKQLRQ…ERLRACMQKL (139 aa). In terms of domain architecture, Olfactomedin-like spans 226–478; that stretch reads ACGKLTGISD…QILYNVTLFH (253 aa). A disulfide bridge connects residues C227 and C409.

Homotetramer; disulfide-linked. Dimer of dimers, giving rise to a V-shaped homotretramer. Component of the AMPAR complex. Glycosylated.

It localises to the secreted. Its subcellular location is the synapse. The protein resides in the endoplasmic reticulum. The protein localises to the cell projection. It is found in the axon. It localises to the perikaryon. Functionally, contributes to the regulation of axonal growth. May play an important role in regulating the production of neural crest cells by the neural tube. In Gallus gallus (Chicken), this protein is Noelin (OLFM1).